The primary structure comprises 530 residues: Trigger factor (530 aa).

A PPIase FKBP-type domain is found at 162-243; it reads DDLVTIDLAG…VTKVCEQELP (82 aa). A disordered region spans residues 432 to 530; the sequence is NALELDRIQP…KTAAKDDKSK (99 aa). 2 stretches are compositionally biased toward basic and acidic residues: residues 459 to 478 and 501 to 512; these read SAEK…EKAP and KVVDAKSDDKPA.

It belongs to the FKBP-type PPIase family. Tig subfamily.

The protein localises to the cytoplasm. The catalysed reaction is [protein]-peptidylproline (omega=180) = [protein]-peptidylproline (omega=0). Involved in protein export. Acts as a chaperone by maintaining the newly synthesized protein in an open conformation. Functions as a peptidyl-prolyl cis-trans isomerase. This is Trigger factor from Cutibacterium acnes (strain DSM 16379 / KPA171202) (Propionibacterium acnes).